The sequence spans 82 residues: uncharacterized protein (82 aa).

This is an uncharacterized protein from Autographa californica nuclear polyhedrosis virus (AcMNPV).